The primary structure comprises 141 residues: Putative lipoprotein Tanf_09445 (141 aa).

A signal peptide spans Met-1–Gly-20. Cys-21 carries the N-palmitoyl cysteine lipid modification. The S-diacylglycerol cysteine moiety is linked to residue Cys-21.

It is found in the cell membrane. The chain is Putative lipoprotein Tanf_09445 from Tannerella forsythia (strain ATCC 43037 / JCM 10827 / CCUG 21028 A / KCTC 5666 / FDC 338) (Bacteroides forsythus).